The following is a 153-amino-acid chain: Aspartate carbamoyltransferase regulatory chain (153 aa).

Cysteine 109, cysteine 114, cysteine 138, and cysteine 141 together coordinate Zn(2+).

It belongs to the PyrI family. Contains catalytic and regulatory chains. It depends on Zn(2+) as a cofactor.

In terms of biological role, involved in allosteric regulation of aspartate carbamoyltransferase. This Escherichia coli (strain ATCC 8739 / DSM 1576 / NBRC 3972 / NCIMB 8545 / WDCM 00012 / Crooks) protein is Aspartate carbamoyltransferase regulatory chain.